Consider the following 249-residue polypeptide: 2,3-bisphosphoglycerate-dependent phosphoglycerate mutase (249 aa).

Residues arginine 8 to asparagine 15, threonine 21 to glycine 22, arginine 60, glutamate 87 to tyrosine 90, lysine 98, arginine 114 to arginine 115, and glycine 183 to asparagine 184 contribute to the substrate site. The Tele-phosphohistidine intermediate role is filled by histidine 9. Glutamate 87 functions as the Proton donor/acceptor in the catalytic mechanism.

It belongs to the phosphoglycerate mutase family. BPG-dependent PGAM subfamily.

The enzyme catalyses (2R)-2-phosphoglycerate = (2R)-3-phosphoglycerate. The protein operates within carbohydrate degradation; glycolysis; pyruvate from D-glyceraldehyde 3-phosphate: step 3/5. In terms of biological role, catalyzes the interconversion of 2-phosphoglycerate and 3-phosphoglycerate. This is 2,3-bisphosphoglycerate-dependent phosphoglycerate mutase from Pelodictyon phaeoclathratiforme (strain DSM 5477 / BU-1).